We begin with the raw amino-acid sequence, 147 residues long: Small ribosomal subunit protein uS12 (147 aa).

Belongs to the universal ribosomal protein uS12 family. Part of the 30S ribosomal subunit.

In terms of biological role, with S4 and S5 plays an important role in translational accuracy. Located at the interface of the 30S and 50S subunits. The chain is Small ribosomal subunit protein uS12 from Sulfurisphaera tokodaii (strain DSM 16993 / JCM 10545 / NBRC 100140 / 7) (Sulfolobus tokodaii).